The chain runs to 278 residues: Envelope glycoprotein L (278 aa).

The first 30 residues, 1-30 (MCRRPDCGFSFSPGPVILLWCCLLLPIVSS), serve as a signal peptide directing secretion. Positions 43–256 (VPAECPELTR…DKYYAGLPPE (214 aa)) constitute a gL betaherpesvirus-type domain. Cysteines 154 and 159 form a disulfide.

This sequence belongs to the herpesviridae glycoprotein L (gL) family. Betaherpesvirinae gL subfamily. Interacts with glycoprotein H (gH); this interaction is necessary for the correct processing and cell surface expression of gH. Forms the envelope pentamer complex (PC) composed of gH, gL, UL128, UL130, and UL131A. The pentamer interacts with host NRP2. Forms the envelope trimer complex composed of gH, gL, and gO. The trimer interacts with host PDGFRA.

The protein resides in the virion membrane. The protein localises to the host cell membrane. It localises to the host Golgi apparatus. It is found in the host trans-Golgi network. Its function is as follows. The heterodimer glycoprotein H-glycoprotein L is required for the fusion of viral and plasma membranes leading to virus entry into the host cell. Acts as a functional inhibitor of gH and maintains gH in an inhibited form. Upon binding to host integrins, gL dissociates from gH leading to activation of the viral fusion glycoproteins gB and gH. In human cytomegalovirus, forms two distincts complexes to mediate viral entry, a trimer and a pentamer at the surface of the virion envelope. The gH-gL-gO trimer is required for infection in fibroblasts by interacting with host PDGFRA. The gH-gL-UL128-UL130-UL131A pentamer is essential for viral entry in epithelial, endothelial and myeloid cells via interaction with host NRP2. The sequence is that of Envelope glycoprotein L from Human cytomegalovirus (strain PT) (HHV-5).